The primary structure comprises 333 residues: MFSQIISTSDIFTFTIILFVELVIGILGNGFIALVNIMDWTKRRSISSADQILTALAITRFLYVWFMIICILLFMLCPHLLTRSEIVTSIGIIWIVNNHFSVWLATCLGVFYFLKIANFSNSLFLYLKWRVKKVVLMIIQVSMIFLILNLLSLSMYDQFSIDVYEGNTSYNLGDSTPFPTISLFINSSKVFVITNSSHIFLPINSLFMLIPFTVSLVAFLMLIFSLWKHHKKMQVNAKPPRDASTMAHIKALQTGFSFLLLYAVYLLFIVIGMLSLRLIGGKLILLFDHISGIGFPISHSFVLILGNNKLRQASLSVLHCLRCRSKDMDTMGP.

The Extracellular portion of the chain corresponds to 1–13; it reads MFSQIISTSDIFT. The helical transmembrane segment at 14-34 threads the bilayer; sequence FTIILFVELVIGILGNGFIAL. The Cytoplasmic portion of the chain corresponds to 35-60; that stretch reads VNIMDWTKRRSISSADQILTALAITR. A helical transmembrane segment spans residues 61–81; sequence FLYVWFMIICILLFMLCPHLL. Residues 82 to 89 are Extracellular-facing; the sequence is TRSEIVTS. The chain crosses the membrane as a helical span at residues 90–110; the sequence is IGIIWIVNNHFSVWLATCLGV. At 111-133 the chain is on the cytoplasmic side; it reads FYFLKIANFSNSLFLYLKWRVKK. The helical transmembrane segment at 134-154 threads the bilayer; sequence VVLMIIQVSMIFLILNLLSLS. Topologically, residues 155–205 are extracellular; the sequence is MYDQFSIDVYEGNTSYNLGDSTPFPTISLFINSSKVFVITNSSHIFLPINS. N-linked (GlcNAc...) asparagine glycans are attached at residues asparagine 186 and asparagine 195. The chain crosses the membrane as a helical span at residues 206 to 226; that stretch reads LFMLIPFTVSLVAFLMLIFSL. Residues 227–255 are Cytoplasmic-facing; sequence WKHHKKMQVNAKPPRDASTMAHIKALQTG. The chain crosses the membrane as a helical span at residues 256-276; sequence FSFLLLYAVYLLFIVIGMLSL. Topologically, residues 277-283 are extracellular; it reads RLIGGKL. A helical membrane pass occupies residues 284-304; sequence ILLFDHISGIGFPISHSFVLI. Over 305 to 333 the chain is Cytoplasmic; sequence LGNNKLRQASLSVLHCLRCRSKDMDTMGP.

Belongs to the G-protein coupled receptor T2R family.

It is found in the membrane. Gustducin-coupled receptor implicated in the perception of bitter compounds in the oral cavity and the gastrointestinal tract. Signals through PLCB2 and the calcium-regulated cation channel TRPM5. The chain is Taste receptor type 2 member 110 from Mus musculus (Mouse).